Consider the following 979-residue polypeptide: Calsyntenin-1 (979 aa).

The first 28 residues, 1-28, serve as a signal peptide directing secretion; the sequence is MLRRPAPALAPAVRLLLAGLLCGGGVWA. The Extracellular portion of the chain corresponds to 29–859; that stretch reads ARVNKHKPWL…PHPFAVVPST (831 aa). Cadherin domains are found at residues 38–164 and 165–265; these read LEPT…APVF and KEKS…SPGW. 3 N-linked (GlcNAc...) asparagine glycosylation sites follow: Asn-346, Asn-366, and Asn-515. The chain crosses the membrane as a helical span at residues 860-880; sequence ATVVIVVCVSFLVFMIILGVF. Topologically, residues 881-979 are cytoplasmic; sequence RIRAAHQRTM…LEWDDSTLSY (99 aa). The disordered stretch occupies residues 915-979; sequence METYEDQHSS…LEWDDSTLSY (65 aa). Positions 925–959 are enriched in acidic residues; that stretch reads EEEEEEEEEEESEDGEEEEDITSAESESSEEEEGG.

It belongs to the calsyntenin family. In terms of assembly, directly interacts with APBA2. Forms a tripartite complex with APBA2 and APP. The CTF1 chain interacts with PSEN1. Interacts with KLC1 and APBB1. Interacts with APBB1; this interaction stabilizes AlcICD metabolism. As to quaternary structure, interacts with PSEN1. Proteolytically processed under normal cellular conditions. A primary zeta-cleavage generates a large extracellular (soluble) N-terminal domain (sAlc) and a short C-terminal transmembrane fragment (CTF1). A secondary cleavage catalyzed by presenilin gamma-secretase within the transmembrane domain releases the beta-Alc-alpha chain in the extracellular milieu and produces an intracellular fragment (AlcICD). Beta-Alc-alpha secretion is largely dependent upon PSEN1 and PSEN2. This processing is strongly suppressed in the tripartite complex formed with APBA2 and APP, which seems to prevent the association with PSEN1. In terms of tissue distribution, highly expressed in the brain (at protein level), with over 90% of the neurons expressing detectable amounts. In the brain, relatively high levels in the cerebral cortex, striatum, hippocampus and thalamus. Moderate levels in the cerebellum. Low levels in the olfactory bulb, midbrain and pons (at protein level). Not detected in Purkinje cells. Expressed at low levels in the lung (at protein level). At the mRNA level, weakly detected in the kidney, lung, skeletal muscle, heart and testis. Not expressed in the sciatic nerve fiber.

The protein localises to the postsynaptic cell membrane. It is found in the endoplasmic reticulum membrane. The protein resides in the golgi apparatus membrane. It localises to the cell projection. Its subcellular location is the neuron projection. The protein localises to the vesicle. It is found in the nucleus. Its function is as follows. Postsynaptic adhesion molecule that binds to presynaptic neurexins to mediate both excitatory and inhibitory synapse formation. Promotes synapse development by acting as a cell adhesion molecule at the postsynaptic membrane, which associates with neurexin-alpha at the presynaptic membrane. Also functions as a cargo in axonal anterograde transport by acting as a molecular adapter that promotes KLC1 association with vesicles. Complex formation with APBA2 and APP, stabilizes APP metabolism and enhances APBA2-mediated suppression of beta-APP40 secretion, due to the retardation of intracellular APP maturation. In terms of biological role, as intracellular fragment AlcICD, suppresses APBB1-dependent transactivation stimulated by APP C-terminal intracellular fragment (AICD), most probably by competing with AICD for APBB1-binding. Functionally, in complex with APBA2 and C99, a C-terminal APP fragment, abolishes C99 interaction with PSEN1 and thus APP C99 cleavage by gamma-secretase, most probably through stabilization of the direct interaction between APBA2 and APP. The sequence is that of Calsyntenin-1 from Mus musculus (Mouse).